We begin with the raw amino-acid sequence, 167 residues long: Cell division protein SepF (167 aa).

A disordered region spans residues Glu25–Leu64. Residues Lys39–Gln51 show a composition bias toward basic residues.

The protein belongs to the SepF family. Homodimer. Interacts with FtsZ.

It localises to the cytoplasm. In terms of biological role, cell division protein that is part of the divisome complex and is recruited early to the Z-ring. Probably stimulates Z-ring formation, perhaps through the cross-linking of FtsZ protofilaments. Its function overlaps with FtsA. The polypeptide is Cell division protein SepF (Natranaerobius thermophilus (strain ATCC BAA-1301 / DSM 18059 / JW/NM-WN-LF)).